A 133-amino-acid chain; its full sequence is ATP synthase epsilon chain, sodium ion specific (133 aa).

Belongs to the ATPase epsilon chain family. As to quaternary structure, F-type ATPases have 2 components, CF(1) - the catalytic core - and CF(0) - the membrane proton channel. CF(1) has five subunits: alpha(3), beta(3), gamma(1), delta(1), epsilon(1). CF(0) has three main subunits: a, b and c.

It is found in the cell membrane. Its activity is regulated as follows. Inhibited by nitrate. Its function is as follows. Produces ATP from ADP in the presence of a sodium gradient across the membrane. This Acetobacterium woodii (strain ATCC 29683 / DSM 1030 / JCM 2381 / KCTC 1655 / WB1) protein is ATP synthase epsilon chain, sodium ion specific (atpC).